The chain runs to 74 residues: MKLTCVVIVAVLFLTACQLITAETYSRGEQKHRALSSTDKNSKLTRTCNTPTQYCTLHRHCCSLYCHKTIHACA.

The signal sequence occupies residues 1 to 22 (MKLTCVVIVAVLFLTACQLITA). The propeptide occupies 23–46 (ETYSRGEQKHRALSSTDKNSKLTR). Cystine bridges form between cysteine 48/cysteine 62, cysteine 55/cysteine 66, and cysteine 61/cysteine 73.

The protein belongs to the conotoxin O1 superfamily. As to expression, expressed by the venom duct.

It is found in the secreted. Its function is as follows. Omega-conotoxins act at presynaptic membranes, they bind and block voltage-gated calcium channels (Cav). In Conus pulicarius (Flea-bitten cone), this protein is Omega-conotoxin-like PuIIA.